Here is a 460-residue protein sequence, read N- to C-terminus: Benzyl alcohol O-benzoyltransferase (460 aa).

Catalysis depends on proton acceptor residues histidine 167 and aspartate 382.

The protein belongs to the plant acyltransferase family. In terms of tissue distribution, specifically expressed in flowers, mainly in the limb of flowers corollas, and, at low levels, in roots, stems, sepals and leaves.

It catalyses the reaction benzyl alcohol + benzoyl-CoA = benzyl benzoate + CoA. The catalysed reaction is benzyl alcohol + acetyl-CoA = benzyl acetate + CoA. The enzyme catalyses 3-hydroxybenzyl alcohol + acetyl-CoA = 3-hydroxy-benzyl acetate + CoA. It carries out the reaction 3-hydroxybenzyl alcohol + benzoyl-CoA = 3-hydroxy-benzyl benzoate + CoA. It catalyses the reaction 2-phenylethanol + benzoyl-CoA = phenethyl benzoate + CoA. The catalysed reaction is (3Z)-hex-3-en-1-ol + benzoyl-CoA = (3Z)-hex-3-en-1-yl benzoate + CoA. The enzyme catalyses (2E)-geraniol + acetyl-CoA = (2E)-geranyl acetate + CoA. It carries out the reaction butan-1-ol + benzoyl-CoA = butyl benzoate + CoA. It catalyses the reaction (2E)-geraniol + benzoyl-CoA = (2E)-geranyl benzoate + CoA. The catalysed reaction is octan-1-ol + benzoyl-CoA = octyl benzoate + CoA. It participates in aromatic compound metabolism; benzoyl-CoA degradation. Functionally, involved in the production of volatile organic compounds (VOCs), including floral volatile benzenoids and phenylpropanoids (FVBP), in flowers of fragrant cultivars (e.g. cv. Mitchell and cv. V26), scent attracting pollinators (e.g. the night-active hawkmoth pollinator Manduca sexta). Acyltransferase that catalyzes the transfer of benzoyl and acetyl moieties to a large variety of potential substrate alcohols, and involved in the formation of volatile esters benzyl benzoate and phenylethyl benzoate from benzoyl-CoA. With acetyl-CoA, mainly active on benzyl alcohol, and, to a lower extent, on 3-hydroxybenzyl alcohol, geraniol, and 2-phenylethanol, but barely active on butanol, 1-octanol, 4-hydroxy-benzyl alcohol, 2-hexanol, cis-3-hexen-1-ol and linalool. With benzoyl-CoA, mainly active on benzyl alcohol, but also efficient on several substrates, including 3-hydroxybenzyl alcohol, 2-phenylethanol, geraniol, butanol, cis-3-hexen-1-ol and 1-octanol. This Petunia hybrida (Petunia) protein is Benzyl alcohol O-benzoyltransferase.